A 562-amino-acid chain; its full sequence is Bifunctional coenzyme A synthase (562 aa).

A phosphoserine mark is found at Ser177 and Ser182. Positions 179–357 are phosphopantetheine adenylyltransferase; that stretch reads VARSAKQPVR…HKRPELPPGC (179 aa). The DPCK domain occupies 359 to 562; sequence VIGLTGISGS…KRISEAPSDP (204 aa). Residue 364–371 participates in ATP binding; it reads GISGSGKS.

It in the central section; belongs to the eukaryotic CoaD family. As to quaternary structure, monomer. Post-translationally, the N-terminus is blocked.

Its subcellular location is the cytoplasm. The protein resides in the mitochondrion matrix. It catalyses the reaction (R)-4'-phosphopantetheine + ATP + H(+) = 3'-dephospho-CoA + diphosphate. The enzyme catalyses 3'-dephospho-CoA + ATP = ADP + CoA + H(+). Its pathway is cofactor biosynthesis; coenzyme A biosynthesis; CoA from (R)-pantothenate: step 4/5. It participates in cofactor biosynthesis; coenzyme A biosynthesis; CoA from (R)-pantothenate: step 5/5. Its function is as follows. Bifunctional enzyme that catalyzes the fourth and fifth sequential steps of CoA biosynthetic pathway. The fourth reaction is catalyzed by the phosphopantetheine adenylyltransferase, coded by the coaD domain; the fifth reaction is catalyzed by the dephospho-CoA kinase, coded by the coaE domain. May act as a point of CoA biosynthesis regulation. The polypeptide is Bifunctional coenzyme A synthase (Sus scrofa (Pig)).